We begin with the raw amino-acid sequence, 524 residues long: Cysteine--tRNA ligase (524 aa).

Cys29 is a Zn(2+) binding site. Positions 31 to 41 (PTVQAAPHVGH) match the 'HIGH' region motif. Zn(2+) is bound by residues Cys207, His232, and Glu236. Residues 246-258 (ARPASNAASADSP) show a composition bias toward low complexity. Residues 246–273 (ARPASNAASADSPGPGGGEPGGGEPSSG) are disordered. The segment covering 259-270 (GPGGGEPGGGEP) has biased composition (gly residues). A 'KMSKS' region motif is present at residues 291-295 (KMSKS). Position 294 (Lys294) interacts with ATP.

The protein belongs to the class-I aminoacyl-tRNA synthetase family. As to quaternary structure, monomer. The cofactor is Zn(2+).

Its subcellular location is the cytoplasm. The catalysed reaction is tRNA(Cys) + L-cysteine + ATP = L-cysteinyl-tRNA(Cys) + AMP + diphosphate. This is Cysteine--tRNA ligase from Frankia casuarinae (strain DSM 45818 / CECT 9043 / HFP020203 / CcI3).